A 322-amino-acid chain; its full sequence is Phosphatidylserine decarboxylase proenzyme (322 aa).

Residues aspartate 90, histidine 147, and serine 254 each act as charge relay system; for autoendoproteolytic cleavage activity in the active site. Residue serine 254 is the Schiff-base intermediate with substrate; via pyruvic acid; for decarboxylase activity of the active site. At serine 254 the chain carries Pyruvic acid (Ser); by autocatalysis. Positions 295 to 322 are disordered; it reads VEPAPLPTEEIKAEHDASPLVDNKKDDT. The segment covering 303-322 has biased composition (basic and acidic residues); the sequence is EEIKAEHDASPLVDNKKDDT.

It belongs to the phosphatidylserine decarboxylase family. PSD-B subfamily. Prokaryotic type I sub-subfamily. In terms of assembly, heterodimer of a large membrane-associated beta subunit and a small pyruvoyl-containing alpha subunit. Requires pyruvate as cofactor. In terms of processing, is synthesized initially as an inactive proenzyme. Formation of the active enzyme involves a self-maturation process in which the active site pyruvoyl group is generated from an internal serine residue via an autocatalytic post-translational modification. Two non-identical subunits are generated from the proenzyme in this reaction, and the pyruvate is formed at the N-terminus of the alpha chain, which is derived from the carboxyl end of the proenzyme. The autoendoproteolytic cleavage occurs by a canonical serine protease mechanism, in which the side chain hydroxyl group of the serine supplies its oxygen atom to form the C-terminus of the beta chain, while the remainder of the serine residue undergoes an oxidative deamination to produce ammonia and the pyruvoyl prosthetic group on the alpha chain. During this reaction, the Ser that is part of the protease active site of the proenzyme becomes the pyruvoyl prosthetic group, which constitutes an essential element of the active site of the mature decarboxylase.

The protein resides in the cell membrane. The catalysed reaction is a 1,2-diacyl-sn-glycero-3-phospho-L-serine + H(+) = a 1,2-diacyl-sn-glycero-3-phosphoethanolamine + CO2. The protein operates within phospholipid metabolism; phosphatidylethanolamine biosynthesis; phosphatidylethanolamine from CDP-diacylglycerol: step 2/2. Functionally, catalyzes the formation of phosphatidylethanolamine (PtdEtn) from phosphatidylserine (PtdSer). This Salmonella agona (strain SL483) protein is Phosphatidylserine decarboxylase proenzyme.